We begin with the raw amino-acid sequence, 514 residues long: Calcium-binding mitochondrial carrier protein SCaMC-2 (514 aa).

Residues 1 to 234 lie on the Mitochondrial intermembrane side of the membrane; the sequence is MARPRSLVSP…EKQTGMWWRH (234 aa). EF-hand domains are found at residues 56–91, 92–122, 123–158, and 159–194; these read EHER…LGVH, RTEL…HYLR, DHEK…LGVN, and ISEQ…HSAE. Ca(2+) is bound by residues D69, N71, D73, D80, D105, D107, D109, Q111, and E116. 3 Solcar repeats span residues 229–315, 323–408, and 420–508; these read GMWW…IKRI, LGIH…LKNA, and PGVF…LKLT. The chain crosses the membrane as a helical span at residues 235 to 252; the sequence is LVAGGGAGAVSRTCTAPL. Residues 253–289 lie on the Mitochondrial matrix side of the membrane; the sequence is DRLKVLMQVHASRSNNMSILGGFTHMIREGGFRSLWR. Residues 290 to 309 traverse the membrane as a helical segment; the sequence is GNGINVIKIAPESAIKFMAY. The Mitochondrial intermembrane segment spans residues 310–332; it reads EQIKRIIGSNQETLGIHERFVAG. A helical membrane pass occupies residues 333 to 346; that stretch reads SLAGVIAQSSIYPM. The Mitochondrial matrix segment spans residues 347–382; that stretch reads EVLKTRMALRKTGQYQGVLDCGKKILLQEGLSAFYK. Residues 383-402 traverse the membrane as a helical segment; sequence GYVPNMLGIIPYAGIDLAVY. Over 403 to 425 the chain is Mitochondrial intermembrane; it reads ETLKNAWLQRYATSSADPGVFVL. A helical transmembrane segment spans residues 426-443; sequence LACGTVSSTCGQLASYPL. Topologically, residues 444–482 are mitochondrial matrix; sequence ALVRTRMQAEASVEGAPQMTMSKLFKHIVKTEGAFGLYR. Residues 483 to 502 traverse the membrane as a helical segment; that stretch reads GLAPNFMKVIPAVSISYVVY. Over 503–514 the chain is Mitochondrial intermembrane; it reads ENLKLTLGVQSR.

This sequence belongs to the mitochondrial carrier (TC 2.A.29) family.

The protein localises to the mitochondrion inner membrane. In terms of biological role, calcium-dependent mitochondrial solute carrier. This chain is Calcium-binding mitochondrial carrier protein SCaMC-2 (slc25a25), found in Xenopus laevis (African clawed frog).